Consider the following 445-residue polypeptide: MKFPASVLASVFLFVAETMAALYLSSTYRSAGDRMWQALTLFFSLMPCTLVQLTLLFVHRDLSRDRPLVLLMHLLQLGPLYRCCEVFCIYCQSDQNEEPYVSITKKRQMPKDGLSEEVEKEVGQSEGKLFTHRSAFSRASVIQAFLGSAPQLTLQLYITVLEQNITTGRFIMVLSLLSIVYGALRCNILAIKIKYDEYEVKVKPLAYVCIFLWRSFEIATRVIVLVLFTSVLKIWVVVVILVNFFSFFLYPWILFWNSGSPFPENIEKALTRVGTTIVLGFLTLLYAGINMFCWSAVQLKIDNPELISKSQNWYRLLIYYMMRFVENSVLLLLWFFFKTDIYMYVCAPLLILQLLIGYCTSILFMLVFYQFFHPCKKLFSSSVSESFSACLRCVCWSSARRKSTEPVGRIDTDLKACTDQGAQPSTSKLTPEATEIWTAVDLCST.

Residues 1-2 are Cytoplasmic-facing; sequence MK. The helical transmembrane segment at 3 to 23 threads the bilayer; the sequence is FPASVLASVFLFVAETMAALY. Over 24 to 37 the chain is Extracellular; sequence LSSTYRSAGDRMWQ. Residues 38 to 58 traverse the membrane as a helical segment; sequence ALTLFFSLMPCTLVQLTLLFV. The Cytoplasmic segment spans residues 59-68; that stretch reads HRDLSRDRPL. Residues 69-89 traverse the membrane as a helical segment; the sequence is VLLMHLLQLGPLYRCCEVFCI. The Extracellular segment spans residues 90 to 140; it reads YCQSDQNEEPYVSITKKRQMPKDGLSEEVEKEVGQSEGKLFTHRSAFSRAS. Ser-115 carries the post-translational modification Phosphoserine. Residues 141–161 form a helical membrane-spanning segment; the sequence is VIQAFLGSAPQLTLQLYITVL. Topologically, residues 162-170 are cytoplasmic; that stretch reads EQNITTGRF. Residues 171-191 form a helical membrane-spanning segment; the sequence is IMVLSLLSIVYGALRCNILAI. Over 192–207 the chain is Extracellular; it reads KIKYDEYEVKVKPLAY. A helical membrane pass occupies residues 208-228; sequence VCIFLWRSFEIATRVIVLVLF. Topologically, residues 229 to 234 are cytoplasmic; it reads TSVLKI. Residues 235 to 255 form a helical membrane-spanning segment; it reads WVVVVILVNFFSFFLYPWILF. Over 256–276 the chain is Extracellular; that stretch reads WNSGSPFPENIEKALTRVGTT. The chain crosses the membrane as a helical span at residues 277-297; sequence IVLGFLTLLYAGINMFCWSAV. Residues 298–316 lie on the Cytoplasmic side of the membrane; that stretch reads QLKIDNPELISKSQNWYRL. Residues 317–337 form a helical membrane-spanning segment; it reads LIYYMMRFVENSVLLLLWFFF. Residues 338–348 lie on the Extracellular side of the membrane; the sequence is KTDIYMYVCAP. A helical membrane pass occupies residues 349 to 369; it reads LLILQLLIGYCTSILFMLVFY. The Cytoplasmic segment spans residues 370–445; that stretch reads QFFHPCKKLF…IWTAVDLCST (76 aa).

The protein belongs to the XK family. In terms of assembly, heterodimer with Kell; disulfide-linked. Interacts with VPS13A.

It is found in the endoplasmic reticulum membrane. In terms of biological role, recruits the lipid transfer protein VPS13A from lipid droplets to the endoplasmic reticulum (ER) membrane. The protein is Endoplasmic reticulum membrane adapter protein XK of Rattus norvegicus (Rat).